Consider the following 400-residue polypeptide: WD repeat and FYVE domain-containing protein 2 (400 aa).

6 WD repeats span residues 22 to 61 (GSQE…QYWP), 66 to 105 (AMPS…NKMT), 112 to 150 (AHQS…QRLG), 153 to 192 (RTSA…CTLL), 197 to 236 (GHTG…GTAI), and 240 to 279 (GHND…QETP). Residues 281 to 352 (WLDSDSCQKC…VCDSCHEAIT (72 aa)) form an FYVE-type zinc finger. 8 residues coordinate Zn(2+): C287, C290, C314, C317, C322, C325, C344, and C347. The WD 7 repeat unit spans residues 364–399 (DSKHNIVHVHFDATRGWLLTSGTDKVIKLWDMTPVV).

As to quaternary structure, homodimer. Interacts (via WD repeats 1-3) with AKT1, AKT2, PRKCZ and PRKCI. Interacts with VAMP2. Forms a complex with VAMP2 and PRKCZ. Interacts with FOXO1. Forms a complex with AKT1 and FOXO1. In terms of tissue distribution, highly expressed in the brain (at protein level).

The protein resides in the endosome. Its subcellular location is the early endosome. The protein localises to the cytoplasm. Its function is as follows. Acts in an adapter protein-like fashion to mediate the interaction between the kinase PRKCZ and its substrate VAMP2 and increases the PRKCZ-dependent phosphorylation of VAMP2. Positively regulates adipocyte differentiation, by facilitating the phosphorylation and thus inactivation of the anti-adipogenetic transcription factor FOXO1 by the kinase AKT1. Plays a role in endosomal control of AKT2 signaling; required for insulin-stimulated AKT2 phosphorylation and glucose uptake and insulin-stimulated phosphorylation of AKT2 substrates. Participates in transferrin receptor endocytosis. The polypeptide is WD repeat and FYVE domain-containing protein 2 (Wdfy2) (Mus musculus (Mouse)).